The chain runs to 277 residues: Undecaprenyl-diphosphatase (277 aa).

A run of 7 helical transmembrane segments spans residues 3-23 (IALL…EFLP), 44-64 (AKVF…LVYW), 82-102 (QFAL…LLFG), 109-129 (LFTP…ILWA), 189-209 (TDFS…YSLF), 218-238 (ADAP…WLCI), and 253-273 (FAWY…SGVV).

The protein belongs to the UppP family.

It localises to the cell inner membrane. It carries out the reaction di-trans,octa-cis-undecaprenyl diphosphate + H2O = di-trans,octa-cis-undecaprenyl phosphate + phosphate + H(+). Functionally, catalyzes the dephosphorylation of undecaprenyl diphosphate (UPP). Confers resistance to bacitracin. In Polaromonas naphthalenivorans (strain CJ2), this protein is Undecaprenyl-diphosphatase.